A 262-amino-acid polypeptide reads, in one-letter code: Flap endonuclease Xni (262 aa).

Aspartate 105 contributes to the Mg(2+) binding site. In terms of domain architecture, 5'-3' exonuclease spans 162–254 (ERSQFLDLMA…LKDFRVIDSL (93 aa)). The K(+) site is built by leucine 172, alanine 173, proline 181, isoleucine 183, and isoleucine 186. The tract at residues 185–190 (GIGPKS) is interaction with DNA.

The protein belongs to the Xni family. Mg(2+) serves as cofactor. Requires K(+) as cofactor.

Functionally, has flap endonuclease activity. During DNA replication, flap endonucleases cleave the 5'-overhanging flap structure that is generated by displacement synthesis when DNA polymerase encounters the 5'-end of a downstream Okazaki fragment. The chain is Flap endonuclease Xni from Shewanella baltica (strain OS195).